The sequence spans 364 residues: Paraneoplastic antigen Ma2 homolog (364 aa).

An N-acetylalanine modification is found at alanine 2. The span at 335 to 353 (EEEEASFENESIEEPEEGD) shows a compositional bias: acidic residues. The tract at residues 335–364 (EEEEASFENESIEEPEEGDGYGRWNHEGDD) is disordered.

The protein belongs to the PNMA family.

The protein resides in the nucleus. It is found in the nucleolus. This chain is Paraneoplastic antigen Ma2 homolog (PNMA2), found in Pongo abelii (Sumatran orangutan).